The sequence spans 45 residues: Large ribosomal subunit protein bL34 (45 aa).

Residues 1–45 (MTKRTFGGTSRKRKRVSGFRVRMRSHTGRRVIKSRRKRGRERIAV) form a disordered region. The segment covering 10-45 (SRKRKRVSGFRVRMRSHTGRRVIKSRRKRGRERIAV) has biased composition (basic residues).

It belongs to the bacterial ribosomal protein bL34 family.

The sequence is that of Large ribosomal subunit protein bL34 from Prochlorococcus marinus subsp. pastoris (strain CCMP1986 / NIES-2087 / MED4).